Here is a 358-residue protein sequence, read N- to C-terminus: Dynein axonemal assembly factor 10 (358 aa).

WD repeat units lie at residues 64 to 106 (EKPK…TPVY), 116 to 155 (NCID…TPVA), 163 to 206 (EAKR…VRWE), 208 to 250 (NIKN…PTKG), 258 to 298 (AHKS…QRSR), and 320 to 358 (LSTQ…LNRL).

As to quaternary structure, interacts with PIH1D1; the interaction associates DNAAF10 with the R2TP complex. Interacts with several dynein axonemal assembly factors.

Its subcellular location is the dynein axonemal particle. Its function is as follows. Key assembly factor specifically required for the stability of axonemal dynein heavy chains in cytoplasm. This chain is Dynein axonemal assembly factor 10 (dnaaf10), found in Xenopus laevis (African clawed frog).